The following is a 232-amino-acid chain: 2-C-methyl-D-erythritol 4-phosphate cytidylyltransferase (232 aa).

This sequence belongs to the IspD/TarI cytidylyltransferase family. IspD subfamily.

The enzyme catalyses 2-C-methyl-D-erythritol 4-phosphate + CTP + H(+) = 4-CDP-2-C-methyl-D-erythritol + diphosphate. It functions in the pathway isoprenoid biosynthesis; isopentenyl diphosphate biosynthesis via DXP pathway; isopentenyl diphosphate from 1-deoxy-D-xylulose 5-phosphate: step 2/6. In terms of biological role, catalyzes the formation of 4-diphosphocytidyl-2-C-methyl-D-erythritol from CTP and 2-C-methyl-D-erythritol 4-phosphate (MEP). The polypeptide is 2-C-methyl-D-erythritol 4-phosphate cytidylyltransferase (Geobacter metallireducens (strain ATCC 53774 / DSM 7210 / GS-15)).